Here is a 419-residue protein sequence, read N- to C-terminus: UDP-N-acetylglucosamine 1-carboxyvinyltransferase (419 aa).

A phosphoenolpyruvate-binding site is contributed by 22–23 (KN). Residue R92 participates in UDP-N-acetyl-alpha-D-glucosamine binding. Catalysis depends on C116, which acts as the Proton donor. C116 carries the post-translational modification 2-(S-cysteinyl)pyruvic acid O-phosphothioketal. UDP-N-acetyl-alpha-D-glucosamine-binding residues include D306 and I328.

The protein belongs to the EPSP synthase family. MurA subfamily.

Its subcellular location is the cytoplasm. The catalysed reaction is phosphoenolpyruvate + UDP-N-acetyl-alpha-D-glucosamine = UDP-N-acetyl-3-O-(1-carboxyvinyl)-alpha-D-glucosamine + phosphate. The protein operates within cell wall biogenesis; peptidoglycan biosynthesis. Cell wall formation. Adds enolpyruvyl to UDP-N-acetylglucosamine. This chain is UDP-N-acetylglucosamine 1-carboxyvinyltransferase, found in Pseudoalteromonas translucida (strain TAC 125).